A 40-amino-acid polypeptide reads, in one-letter code: Bacterioferritin heavy chain (40 aa).

The region spanning Met-1–Tyr-40 is the Ferritin-like diiron domain. Residue Glu-18 coordinates Fe cation.

Belongs to the bacterioferritin family. Oligomer consisting of two types of subunits: light chain and heavy chain.

May perform analogous functions in iron detoxification and storage to that of animal ferritins. Contains approximately 750 iron atoms per molecule. This chain is Bacterioferritin heavy chain, found in Absidia spinosa.